Here is a 483-residue protein sequence, read N- to C-terminus: Probable Xaa-Pro aminopeptidase MCYG_06503 (483 aa).

Residues D233, D244, E409, and E453 each contribute to the Mn(2+) site.

The protein belongs to the peptidase M24B family. Requires Mn(2+) as cofactor.

The catalysed reaction is Release of any N-terminal amino acid, including proline, that is linked to proline, even from a dipeptide or tripeptide.. Catalyzes the removal of a penultimate prolyl residue from the N-termini of peptides. This is Probable Xaa-Pro aminopeptidase MCYG_06503 from Arthroderma otae (strain ATCC MYA-4605 / CBS 113480) (Microsporum canis).